The chain runs to 214 residues: Large ribosomal subunit protein uL3 (214 aa).

Residues 134–153 (ATHGNSLSHRAPGSIGQNQT) are disordered. The residue at position 152 (Gln152) is an N5-methylglutamine.

It belongs to the universal ribosomal protein uL3 family. As to quaternary structure, part of the 50S ribosomal subunit. Forms a cluster with proteins L14 and L19. Methylated by PrmB.

One of the primary rRNA binding proteins, it binds directly near the 3'-end of the 23S rRNA, where it nucleates assembly of the 50S subunit. The chain is Large ribosomal subunit protein uL3 from Buchnera aphidicola subsp. Baizongia pistaciae (strain Bp).